The primary structure comprises 427 residues: Trigger factor (427 aa).

Positions glycine 163–proline 248 constitute a PPIase FKBP-type domain.

The protein belongs to the FKBP-type PPIase family. Tig subfamily.

Its subcellular location is the cytoplasm. It carries out the reaction [protein]-peptidylproline (omega=180) = [protein]-peptidylproline (omega=0). Its function is as follows. Involved in protein export. Acts as a chaperone by maintaining the newly synthesized protein in an open conformation. Functions as a peptidyl-prolyl cis-trans isomerase. This Streptococcus pneumoniae (strain CGSP14) protein is Trigger factor.